Reading from the N-terminus, the 426-residue chain is Serine--tRNA ligase (426 aa).

233-235 is an L-serine binding site; that stretch reads TSE. An ATP-binding site is contributed by 264–266; the sequence is RAE. Glutamate 287 serves as a coordination point for L-serine. Residue 351 to 354 participates in ATP binding; the sequence is EISS. Serine 387 serves as a coordination point for L-serine.

This sequence belongs to the class-II aminoacyl-tRNA synthetase family. Type-1 seryl-tRNA synthetase subfamily. Homodimer. The tRNA molecule binds across the dimer.

It is found in the cytoplasm. The enzyme catalyses tRNA(Ser) + L-serine + ATP = L-seryl-tRNA(Ser) + AMP + diphosphate + H(+). It catalyses the reaction tRNA(Sec) + L-serine + ATP = L-seryl-tRNA(Sec) + AMP + diphosphate + H(+). It functions in the pathway aminoacyl-tRNA biosynthesis; selenocysteinyl-tRNA(Sec) biosynthesis; L-seryl-tRNA(Sec) from L-serine and tRNA(Sec): step 1/1. In terms of biological role, catalyzes the attachment of serine to tRNA(Ser). Is also able to aminoacylate tRNA(Sec) with serine, to form the misacylated tRNA L-seryl-tRNA(Sec), which will be further converted into selenocysteinyl-tRNA(Sec). This is Serine--tRNA ligase from Stenotrophomonas maltophilia (strain K279a).